A 427-amino-acid polypeptide reads, in one-letter code: Enolase (427 aa).

Glutamine 163 contacts (2R)-2-phosphoglycerate. Glutamate 205 serves as the catalytic Proton donor. Mg(2+) is bound by residues aspartate 242, glutamate 288, and aspartate 315. Positions 340, 369, 370, and 391 each coordinate (2R)-2-phosphoglycerate. Lysine 340 (proton acceptor) is an active-site residue.

This sequence belongs to the enolase family. Mg(2+) is required as a cofactor.

It is found in the cytoplasm. It localises to the secreted. The protein localises to the cell surface. The enzyme catalyses (2R)-2-phosphoglycerate = phosphoenolpyruvate + H2O. It participates in carbohydrate degradation; glycolysis; pyruvate from D-glyceraldehyde 3-phosphate: step 4/5. Its function is as follows. Catalyzes the reversible conversion of 2-phosphoglycerate (2-PG) into phosphoenolpyruvate (PEP). It is essential for the degradation of carbohydrates via glycolysis. The polypeptide is Enolase (Cytophaga hutchinsonii (strain ATCC 33406 / DSM 1761 / CIP 103989 / NBRC 15051 / NCIMB 9469 / D465)).